Reading from the N-terminus, the 63-residue chain is MNFNKVLVLLAVIFAVFAGQTEAGWLKKIGKKIERVGQHTRDATIQTIGVAQQAANVAATLKG.

The N-terminal stretch at 1-21 (MNFNKVLVLLAVIFAVFAGQT) is a signal peptide. Residues 22 to 23 (EA) constitute a propeptide that is removed on maturation. Residue K62 is modified to Lysine amide.

The protein belongs to the cecropin family.

The protein localises to the secreted. Cecropins have lytic and antibacterial activity against several Gram-positive and Gram-negative bacteria. The protein is Cecropin-2 (CEC2) of Ceratitis capitata (Mediterranean fruit fly).